Here is a 389-residue protein sequence, read N- to C-terminus: Chalcone synthase 9 (389 aa).

C164 is an active-site residue.

This sequence belongs to the thiolase-like superfamily. Chalcone/stilbene synthases family.

The enzyme catalyses (E)-4-coumaroyl-CoA + 3 malonyl-CoA + 3 H(+) = 2',4,4',6'-tetrahydroxychalcone + 3 CO2 + 4 CoA. It functions in the pathway secondary metabolite biosynthesis; flavonoid biosynthesis. In terms of biological role, the primary product of this enzyme is 4,2',4',6'-tetrahydroxychalcone (also termed naringenin-chalcone or chalcone) which can under specific conditions spontaneously isomerize into naringenin. The sequence is that of Chalcone synthase 9 (CHS9) from Daucus carota (Wild carrot).